A 743-amino-acid chain; its full sequence is Catalase-peroxidase (743 aa).

The span at 1-15 (MSSDSRPPQPDTSTQ) shows a compositional bias: polar residues. The disordered stretch occupies residues 1 to 40 (MSSDSRPPQPDTSTQSNSESESPAISSPTPQDHAPMTNRD). Over residues 16 to 28 (SNSESESPAISSP) the composition is skewed to low complexity. Positions 110 to 233 (WHAAGTYRIQ…YGATTMGLIY (124 aa)) form a cross-link, tryptophyl-tyrosyl-methioninium (Trp-Tyr) (with M-259). His-111 serves as the catalytic Proton acceptor. The tryptophyl-tyrosyl-methioninium (Tyr-Met) (with W-110) cross-link spans 233–259 (YVNPEGPEGKPDPVAAAHDIRETFARM). His-274 serves as a coordination point for heme b. The interval 490–511 (DKRGGANGGRLRLEPQKSWESN) is disordered.

The protein belongs to the peroxidase family. Peroxidase/catalase subfamily. As to quaternary structure, homodimer or homotetramer. It depends on heme b as a cofactor. Post-translationally, formation of the three residue Trp-Tyr-Met cross-link is important for the catalase, but not the peroxidase activity of the enzyme.

The enzyme catalyses H2O2 + AH2 = A + 2 H2O. It carries out the reaction 2 H2O2 = O2 + 2 H2O. Functionally, bifunctional enzyme with both catalase and broad-spectrum peroxidase activity. The polypeptide is Catalase-peroxidase (Mycobacterium marinum (strain ATCC BAA-535 / M)).